The chain runs to 155 residues: Transcriptional repressor NrdR (155 aa).

A compositionally biased stretch (basic residues) spans 1 to 10 (MQCPHCHHNS). The disordered stretch occupies residues 1 to 21 (MQCPHCHHNSSRVVDSRPTDG). A zinc finger lies at 3–34 (CPHCHHNSSRVVDSRPTDGGRAIRRRRECENC). The region spanning 49–139 (LLVIKKNGTR…VYRQFKDMSV (91 aa)) is the ATP-cone domain.

This sequence belongs to the NrdR family. The cofactor is Zn(2+).

Functionally, negatively regulates transcription of bacterial ribonucleotide reductase nrd genes and operons by binding to NrdR-boxes. The chain is Transcriptional repressor NrdR from Lacticaseibacillus casei (strain BL23) (Lactobacillus casei).